The sequence spans 865 residues: Protein translocase subunit SecA (865 aa).

Residues Gln85, 103–107 (GEGKT), and Asp505 each bind ATP. Cys847, Cys849, Cys858, and His859 together coordinate Zn(2+).

The protein belongs to the SecA family. As to quaternary structure, monomer and homodimer. Part of the essential Sec protein translocation apparatus which comprises SecA, SecYEG and auxiliary proteins SecDF. Other proteins may also be involved. Zn(2+) is required as a cofactor.

It localises to the cell membrane. Its subcellular location is the cytoplasm. It catalyses the reaction ATP + H2O + cellular proteinSide 1 = ADP + phosphate + cellular proteinSide 2.. Its function is as follows. Part of the Sec protein translocase complex. Interacts with the SecYEG preprotein conducting channel. Has a central role in coupling the hydrolysis of ATP to the transfer of proteins into and across the cell membrane, serving as an ATP-driven molecular motor driving the stepwise translocation of polypeptide chains across the membrane. In Lactococcus lactis subsp. cremoris (strain MG1363), this protein is Protein translocase subunit SecA.